A 527-amino-acid chain; its full sequence is Putative zinc finger CCCH domain-containing protein 64 (527 aa).

The segment at 103–127 is disordered; it reads GQLRSTQTTSKRKAASRKGQREQRV. A C3H1-type zinc finger spans residues 213–241; it reads RPGEPFCRYYMKFGECKHMTFCKYNHPKD.

The chain is Putative zinc finger CCCH domain-containing protein 64 from Oryza sativa subsp. japonica (Rice).